The chain runs to 347 residues: MSNSVPVIAVDAMGGDHGPSIVVPGAVRAARENSLKLILVGDKDAISAELNRLPLDGVAYDIVHASQVAGMEEKPSDILRRKKDASVQVACRLVRSGDADGIVSAGNSGATVACGMFIMGRIPGVERPALASVMPTEKKPCVLLDVGANVDCKPYHLFQFGLMAEAFARDLLEIETPRVGLLSIGEEEGKGNSQVKEAYELLREAKNINFVGNIEGCDLFTGNVDVAVCDGFVGNVALKLSEGLASSLARLLKRELLTGIKAKIGTFLARDAFRRFARFVDYAEYGGAPLLGLQGIAIVCHGASNEKAIASAVGMAGTFVSKGTYHHLVETISANEELTSYGKAVKQ.

The protein belongs to the PlsX family. As to quaternary structure, homodimer. Probably interacts with PlsY.

It is found in the cytoplasm. The catalysed reaction is a fatty acyl-[ACP] + phosphate = an acyl phosphate + holo-[ACP]. Its pathway is lipid metabolism; phospholipid metabolism. Catalyzes the reversible formation of acyl-phosphate (acyl-PO(4)) from acyl-[acyl-carrier-protein] (acyl-ACP). This enzyme utilizes acyl-ACP as fatty acyl donor, but not acyl-CoA. The polypeptide is Phosphate acyltransferase (Oleidesulfovibrio alaskensis (strain ATCC BAA-1058 / DSM 17464 / G20) (Desulfovibrio alaskensis)).